The sequence spans 136 residues: Large ribosomal subunit protein uL16 (136 aa).

Belongs to the universal ribosomal protein uL16 family. Part of the 50S ribosomal subunit.

Its function is as follows. Binds 23S rRNA and is also seen to make contacts with the A and possibly P site tRNAs. The polypeptide is Large ribosomal subunit protein uL16 (Mesomycoplasma hyopneumoniae (strain 232) (Mycoplasma hyopneumoniae)).